A 353-amino-acid polypeptide reads, in one-letter code: MGVSSTTPHLLRAARGEVVDRPPVWMMRQAGRYMKAYRDLREKYPSFRDRSEIPDVAIEVSLQPWKAFQPDGVILFSDIVTPLPGLGIDMDIAEGKGPIIHSPLRTQEQIDRLHPLEPEAALPFIKTILQALRSEVGDKSTVLGFVGAPWTLAAYAVEGKGSKTYSIIKNMAFSDPTILHQLLTKLADAIAIYARYQIDSGAQVVQMFDSWAGQLSPQDYDTFALPYQQRVFQQVKQTHPDTPLILLVSGSAGVLERMAQSGADIVSVDWAVDMADARARLGKQVKVQGNLDPGVLFGSKQFIRDRILDTVRKAGNWGHILNLGHGVLPETPEENVAFFFETAKELNFAGVKN.

Substrate-binding positions include 28–32 (RQAGR), Asp78, Tyr155, Ser210, and His325.

Belongs to the uroporphyrinogen decarboxylase family. Homodimer.

It is found in the cytoplasm. It catalyses the reaction uroporphyrinogen III + 4 H(+) = coproporphyrinogen III + 4 CO2. It participates in porphyrin-containing compound metabolism; protoporphyrin-IX biosynthesis; coproporphyrinogen-III from 5-aminolevulinate: step 4/4. Its function is as follows. Catalyzes the decarboxylation of four acetate groups of uroporphyrinogen-III to yield coproporphyrinogen-III. The polypeptide is Uroporphyrinogen decarboxylase (Nostoc punctiforme (strain ATCC 29133 / PCC 73102)).